A 110-amino-acid polypeptide reads, in one-letter code: Small ribosomal subunit protein bS16 (110 aa).

A compositionally biased stretch (basic and acidic residues) spans 81-104 (VRPAEVLGKQKQEKERSAKKKDAT). Residues 81–110 (VRPAEVLGKQKQEKERSAKKKDATASETSE) are disordered.

The protein belongs to the bacterial ribosomal protein bS16 family.

This chain is Small ribosomal subunit protein bS16, found in Prochlorococcus marinus (strain NATL1A).